Consider the following 348-residue polypeptide: Serpentine receptor class alpha-29 (348 aa).

6 consecutive transmembrane segments (helical) span residues 28–48 (FILM…QTLW), 108–130 (FLYY…DRLF), 145–165 (GFIV…FWTF), 193–213 (INDS…FLYI), 246–266 (CIII…PSIF), and 280–300 (LILA…LIVI).

The protein belongs to the nematode receptor-like protein sra family.

Its subcellular location is the membrane. The polypeptide is Serpentine receptor class alpha-29 (sra-29) (Caenorhabditis elegans).